The chain runs to 550 residues: Arginine--tRNA ligase (550 aa).

A 'HIGH' region motif is present at residues 130–140 (ANPTGPIHIGG).

This sequence belongs to the class-I aminoacyl-tRNA synthetase family. As to quaternary structure, monomer.

It localises to the cytoplasm. The enzyme catalyses tRNA(Arg) + L-arginine + ATP = L-arginyl-tRNA(Arg) + AMP + diphosphate. The protein is Arginine--tRNA ligase (argS) of Mycolicibacterium smegmatis (strain ATCC 700084 / mc(2)155) (Mycobacterium smegmatis).